The primary structure comprises 210 residues: Pyridoxine/pyridoxamine 5'-phosphate oxidase (210 aa).

Substrate is bound by residues 7-10 (RQSY) and lysine 65. FMN is bound by residues 60–65 (RIVLIK), 75–76 (YT), arginine 81, lysine 82, and glutamine 104. Substrate contacts are provided by tyrosine 122, arginine 126, and serine 130. FMN contacts are provided by residues 139–140 (QS) and tryptophan 182. Position 188–190 (188–190 (RLH)) interacts with substrate. FMN is bound at residue arginine 192.

It belongs to the pyridoxamine 5'-phosphate oxidase family. In terms of assembly, homodimer. It depends on FMN as a cofactor.

The catalysed reaction is pyridoxamine 5'-phosphate + O2 + H2O = pyridoxal 5'-phosphate + H2O2 + NH4(+). The enzyme catalyses pyridoxine 5'-phosphate + O2 = pyridoxal 5'-phosphate + H2O2. It functions in the pathway cofactor metabolism; pyridoxal 5'-phosphate salvage; pyridoxal 5'-phosphate from pyridoxamine 5'-phosphate: step 1/1. Its pathway is cofactor metabolism; pyridoxal 5'-phosphate salvage; pyridoxal 5'-phosphate from pyridoxine 5'-phosphate: step 1/1. Its function is as follows. Catalyzes the oxidation of either pyridoxine 5'-phosphate (PNP) or pyridoxamine 5'-phosphate (PMP) into pyridoxal 5'-phosphate (PLP). This is Pyridoxine/pyridoxamine 5'-phosphate oxidase from Bordetella petrii (strain ATCC BAA-461 / DSM 12804 / CCUG 43448).